Reading from the N-terminus, the 1093-residue chain is Protein transport protein Sec24A (1093 aa).

Disordered regions lie at residues 1-29, 60-168, 189-226, and 294-328; these read MSQP…SGSP, HPIP…TSLT, GPSV…ALTP, and SLPP…TQTP. 2 stretches are compositionally biased toward polar residues: residues 112-126 and 138-168; these read ASQN…SSSF and WQYN…TSLT. 2 stretches are compositionally biased toward pro residues: residues 191 to 201 and 209 to 221; these read SVPPLVNPPLP and PHGP…PPPV. Positions 299–328 are enriched in polar residues; the sequence is YQNTTPPGATGVPPSSLNYPSGPQAFTQTP. Residues Cys431, Cys434, Cys452, and Cys455 each coordinate Zn(2+). Positions 431–455 are zinc finger-like; sequence CRSCRTYINPFVSFLDQRRWKCNLC. A Gelsolin-like repeat occupies 966-1038; the sequence is PQPPILQLSV…TPESARIIAF (73 aa).

The protein belongs to the SEC23/SEC24 family. SEC24 subfamily. As to quaternary structure, COPII is composed of at least five proteins: the Sec23/24 complex, the Sec13/31 complex and Sar1. Interacts with TMED2. Interacts (as part of the Sec23/24 complex) with SEC22B; recruits SEC22B into COPII-coated vesicles for its transport from the endoplasmic reticulum to the Golgi. Interacts with STING1; promoting STING1 translocation to COPII vesicles in a STEEP1-dependent manner. Interacts with TMEM39A. Interacts with SACM1L; this interaction is reduced in the absence of TMEM39A. Interacts with kinase FAM20C; transport of FAM20C from the endoplasmic reticulum to the Golgi is likely to be mediated by COPII vesicles.

The protein localises to the cytoplasmic vesicle. It is found in the COPII-coated vesicle membrane. Its subcellular location is the endoplasmic reticulum membrane. It localises to the cytoplasm. The protein resides in the cytosol. Component of the coat protein complex II (COPII) which promotes the formation of transport vesicles from the endoplasmic reticulum (ER). The coat has two main functions, the physical deformation of the endoplasmic reticulum membrane into vesicles and the selection of cargo molecules for their transport to the Golgi complex. Plays a central role in cargo selection within the COPII complex and together with SEC24B may have a different specificity compared to SEC24C and SEC24D. May package preferentially cargos with cytoplasmic DxE or LxxLE motifs and may also recognize conformational epitopes. The sequence is that of Protein transport protein Sec24A from Homo sapiens (Human).